Here is a 664-residue protein sequence, read N- to C-terminus: SPARC-like protein 1 (664 aa).

The first 16 residues, 1-16 (MKTGLFFLCLLGTAAA), serve as a signal peptide directing secretion. An O-glycosylated at one additional site region spans residues 25–34 (SDHSKPTAET). Residues 28–360 (SKPTAETVAP…DGPRHSASDD (333 aa)) are disordered. T31 and T40 each carry an O-linked (GalNAc...) threonine glycan. The O-linked (GalNAc...) serine glycan is linked to S44. The segment covering 62–84 (DDSHHKAEKSSVLKSKEESHEQS) has biased composition (basic and acidic residues). A phosphoserine mark is found at S76, S84, and S92. A compositionally biased stretch (polar residues) spans 85–94 (AEQGKSSSQE). Positions 96-105 (GLKDQEDSDG) are enriched in basic and acidic residues. O-linked (GalNAc...) threonine glycosylation is present at T116. Residues 120-136 (LDIKEDMSEPQEKKLSE) are compositionally biased toward basic and acidic residues. Positions 146-156 (SSFTDSNQQES) are enriched in polar residues. N169 is a glycosylation site (N-linked (GlcNAc...) asparagine). Residues 170-180 (YSHHQLNRSSK) are compositionally biased toward basic residues. The residue at position 171 (S171) is a Phosphoserine. N-linked (GlcNAc...) asparagine glycosylation is found at N176 and N196. The segment covering 188-199 (QGNQEQDPNISN) has biased composition (polar residues). Basic and acidic residues predominate over residues 216–235 (DNQERKTELPREHANSKQEE). Acidic residues-rich tracts occupy residues 236–248 (DNTQ…EESD) and 259–280 (DEFD…EEEN). Position 272 is a phosphoserine (S272). Residue N280 is glycosylated (N-linked (GlcNAc...) asparagine). A compositionally biased stretch (basic and acidic residues) spans 306–316 (SNHKETEEKTV). Residue T331 is glycosylated (O-linked (GalNAc...) threonine). A compositionally biased stretch (acidic residues) spans 339–349 (DDGDDDGDDGG). 2 positions are modified to phosphoserine: S358 and S365. Residues 388 to 426 (EKVHENENIGTTEPGEHQEAKKAENSSNEEETSSEGNMR) form a disordered region. Residue T398 is glycosylated (O-linked (GalNAc...) threonine). Basic and acidic residues predominate over residues 401–411 (PGEHQEAKKAE). Residue N412 is glycosylated (N-linked (GlcNAc...) asparagine). S420 is modified (phosphoserine). The region spanning 432–454 (SCMSFQCKRGHICKADQQGKPHC) is the Follistatin-like domain. Intrachain disulfides connect C433–C444, C438–C454, C456–C490, C462–C483, C472–C509, C515–C626, and C634–C650. The Kazal-like domain maps to 450 to 511 (GKPHCVCQDP…QLDYFGACKS (62 aa)). Residue N476 is glycosylated (N-linked (GlcNAc...) asparagine). One can recognise an EF-hand domain in the interval 622–657 (PMEHCITRFFEECDPNKDKHITLKEWGHCFGIKEED). Positions 635, 637, 639, 641, and 646 each coordinate Ca(2+).

This sequence belongs to the SPARC family. Post-translationally, N- and O-glycosylated. O-glycosylated with a core 1 or possibly core 8 glycan. Highly expressed in lymph node, brain, heart, lung, skeletal muscle, ovary, small intestine, and colon, with lower levels in placenta, pancreas, testis, spleen, and thymus, and no expression in kidney, liver, and peripheral blood leukocytes.

The protein localises to the secreted. It localises to the extracellular space. Its subcellular location is the extracellular matrix. This Homo sapiens (Human) protein is SPARC-like protein 1 (SPARCL1).